We begin with the raw amino-acid sequence, 205 residues long: Beta-crystallin B2 (205 aa).

An N-acetylalanine modification is found at alanine 2. Residues 2–16 (ASDHQTQAGKPQPLN) form an N-terminal arm region. 2 consecutive Beta/gamma crystallin 'Greek key' domains span residues 17-56 (PKII…LVQA) and 57-101 (GPWV…RPIK). The interval 102–106 (VDSQE) is connecting peptide. Beta/gamma crystallin 'Greek key' domains are found at residues 107–148 (HKII…RVQS) and 149–191 (GTWV…RRIR). The tract at residues 193-205 (MQWHQRGAFHPSS) is C-terminal arm.

This sequence belongs to the beta/gamma-crystallin family. As to quaternary structure, homo/heterodimer, or complexes of higher-order. The structure of beta-crystallin oligomers seems to be stabilized through interactions between the N-terminal arms.

In terms of biological role, crystallins are the dominant structural components of the vertebrate eye lens. In Mesocricetus auratus (Golden hamster), this protein is Beta-crystallin B2 (CRYBB2).